The primary structure comprises 207 residues: Large ribosomal subunit protein uL3 (207 aa).

Belongs to the universal ribosomal protein uL3 family. In terms of assembly, part of the 50S ribosomal subunit. Forms a cluster with proteins L14 and L19.

Functionally, one of the primary rRNA binding proteins, it binds directly near the 3'-end of the 23S rRNA, where it nucleates assembly of the 50S subunit. The sequence is that of Large ribosomal subunit protein uL3 from Thermotoga maritima (strain ATCC 43589 / DSM 3109 / JCM 10099 / NBRC 100826 / MSB8).